The sequence spans 254 residues: NH(3)-dependent NAD(+) synthetase (254 aa).

29-36 is a binding site for ATP; it reads GLSGGIDS. Residue aspartate 35 coordinates Mg(2+). Arginine 115 lines the deamido-NAD(+) pocket. Residue threonine 135 participates in ATP binding. Glutamate 140 is a binding site for Mg(2+). Lysine 148 and aspartate 155 together coordinate deamido-NAD(+). Residues lysine 164 and serine 186 each contribute to the ATP site. Residue 245 to 246 coordinates deamido-NAD(+); that stretch reads HK.

This sequence belongs to the NAD synthetase family. In terms of assembly, homodimer.

The catalysed reaction is deamido-NAD(+) + NH4(+) + ATP = AMP + diphosphate + NAD(+) + H(+). The protein operates within cofactor biosynthesis; NAD(+) biosynthesis; NAD(+) from deamido-NAD(+) (ammonia route): step 1/1. Functionally, catalyzes the ATP-dependent amidation of deamido-NAD to form NAD. Uses ammonia as a nitrogen source. This Methanococcus aeolicus (strain ATCC BAA-1280 / DSM 17508 / OCM 812 / Nankai-3) protein is NH(3)-dependent NAD(+) synthetase.